Here is a 305-residue protein sequence, read N- to C-terminus: UDP-3-O-acyl-N-acetylglucosamine deacetylase (305 aa).

The Zn(2+) site is built by His-79, His-238, and Asp-242. His-265 (proton donor) is an active-site residue.

Belongs to the LpxC family. Zn(2+) is required as a cofactor.

The catalysed reaction is a UDP-3-O-[(3R)-3-hydroxyacyl]-N-acetyl-alpha-D-glucosamine + H2O = a UDP-3-O-[(3R)-3-hydroxyacyl]-alpha-D-glucosamine + acetate. It participates in glycolipid biosynthesis; lipid IV(A) biosynthesis; lipid IV(A) from (3R)-3-hydroxytetradecanoyl-[acyl-carrier-protein] and UDP-N-acetyl-alpha-D-glucosamine: step 2/6. In terms of biological role, catalyzes the hydrolysis of UDP-3-O-myristoyl-N-acetylglucosamine to form UDP-3-O-myristoylglucosamine and acetate, the committed step in lipid A biosynthesis. This chain is UDP-3-O-acyl-N-acetylglucosamine deacetylase, found in Escherichia coli O45:K1 (strain S88 / ExPEC).